We begin with the raw amino-acid sequence, 228 residues long: UPF0758 protein CLK_2387 (228 aa).

Residues K106–I228 form the MPN domain. H177, H179, and D190 together coordinate Zn(2+). The short motif at H177–D190 is the JAMM motif element.

This sequence belongs to the UPF0758 family.

This chain is UPF0758 protein CLK_2387, found in Clostridium botulinum (strain Loch Maree / Type A3).